The sequence spans 475 residues: Sulfate adenylyltransferase subunit 1 (475 aa).

The tr-type G domain occupies 24–240; that stretch reads KSLLRFLTCG…ESAEVERELE (217 aa). A G1 region spans residues 33–40; it reads GSVDDGKS. 33–40 contributes to the GTP binding site; it reads GSVDDGKS. The interval 91 to 95 is G2; that stretch reads GITID. The segment at 112–115 is G3; that stretch reads DTPG. GTP contacts are provided by residues 112 to 116 and 167 to 170; these read DTPGH and NKMD. A G4 region spans residues 167-170; sequence NKMD. Residues 204-206 are G5; that stretch reads SAL.

This sequence belongs to the TRAFAC class translation factor GTPase superfamily. Classic translation factor GTPase family. CysN/NodQ subfamily. Heterodimer composed of CysD, the smaller subunit, and CysN.

It catalyses the reaction sulfate + ATP + H(+) = adenosine 5'-phosphosulfate + diphosphate. Its pathway is sulfur metabolism; hydrogen sulfide biosynthesis; sulfite from sulfate: step 1/3. In terms of biological role, with CysD forms the ATP sulfurylase (ATPS) that catalyzes the adenylation of sulfate producing adenosine 5'-phosphosulfate (APS) and diphosphate, the first enzymatic step in sulfur assimilation pathway. APS synthesis involves the formation of a high-energy phosphoric-sulfuric acid anhydride bond driven by GTP hydrolysis by CysN coupled to ATP hydrolysis by CysD. This Aeromonas hydrophila subsp. hydrophila (strain ATCC 7966 / DSM 30187 / BCRC 13018 / CCUG 14551 / JCM 1027 / KCTC 2358 / NCIMB 9240 / NCTC 8049) protein is Sulfate adenylyltransferase subunit 1.